Here is a 212-residue protein sequence, read N- to C-terminus: Orotate phosphoribosyltransferase (212 aa).

Residues Arg97, Lys101, His103, and Glu123–Ser131 each bind 5-phospho-alpha-D-ribose 1-diphosphate. Ser127 contributes to the orotate binding site.

Belongs to the purine/pyrimidine phosphoribosyltransferase family. PyrE subfamily. As to quaternary structure, homodimer. Mg(2+) is required as a cofactor.

The enzyme catalyses orotidine 5'-phosphate + diphosphate = orotate + 5-phospho-alpha-D-ribose 1-diphosphate. It participates in pyrimidine metabolism; UMP biosynthesis via de novo pathway; UMP from orotate: step 1/2. In terms of biological role, catalyzes the transfer of a ribosyl phosphate group from 5-phosphoribose 1-diphosphate to orotate, leading to the formation of orotidine monophosphate (OMP). The sequence is that of Orotate phosphoribosyltransferase from Phocaeicola vulgatus (strain ATCC 8482 / DSM 1447 / JCM 5826 / CCUG 4940 / NBRC 14291 / NCTC 11154) (Bacteroides vulgatus).